The chain runs to 114 residues: Astacin-like metalloprotease toxin 4 (114 aa).

The region spanning 1 to 114 is the Peptidase M12A domain; the sequence is RETNENDYVD…GLLCLFKGSV (114 aa). Cys17 and Cys38 are joined by a disulfide. His46 serves as a coordination point for Zn(2+). Glu47 is an active-site residue. His50 and His56 together coordinate Zn(2+). Residue Asn88 is glycosylated (N-linked (GlcNAc...) asparagine).

In terms of assembly, monomer. Requires Zn(2+) as cofactor. In terms of tissue distribution, expressed by the venom gland.

It localises to the secreted. With respect to regulation, inhibited by 1,10-phenanthroline. In terms of biological role, zinc metalloprotease. Provoques deadhesion of endothelial cells from cell cultures, and also degradation of fibronectin, fibrinogen and gelatin in vitro. Its role in the venom is not fully understood but it might act as a spreading factor that facilitates diffusion of other venom toxins. Alternatively, it might be involved in the proteolytic processing of other venom toxins or it might play a role in extra-oral digestion of prey. The chain is Astacin-like metalloprotease toxin 4 from Loxosceles laeta (South American recluse spider).